The sequence spans 159 residues: 2-C-methyl-D-erythritol 2,4-cyclodiphosphate synthase (159 aa).

Residues Asp10 and His12 each contribute to the a divalent metal cation site. Residues 10–12 and 36–37 contribute to the 4-CDP-2-C-methyl-D-erythritol 2-phosphate site; these read DVH and HS. Position 44 (His44) interacts with a divalent metal cation. 4-CDP-2-C-methyl-D-erythritol 2-phosphate is bound by residues 58–60, 134–137, Phe141, and Arg144; these read DIG and TTTE.

This sequence belongs to the IspF family. Homotrimer. A divalent metal cation is required as a cofactor.

It carries out the reaction 4-CDP-2-C-methyl-D-erythritol 2-phosphate = 2-C-methyl-D-erythritol 2,4-cyclic diphosphate + CMP. It participates in isoprenoid biosynthesis; isopentenyl diphosphate biosynthesis via DXP pathway; isopentenyl diphosphate from 1-deoxy-D-xylulose 5-phosphate: step 4/6. Functionally, involved in the biosynthesis of isopentenyl diphosphate (IPP) and dimethylallyl diphosphate (DMAPP), two major building blocks of isoprenoid compounds. Catalyzes the conversion of 4-diphosphocytidyl-2-C-methyl-D-erythritol 2-phosphate (CDP-ME2P) to 2-C-methyl-D-erythritol 2,4-cyclodiphosphate (ME-CPP) with a corresponding release of cytidine 5-monophosphate (CMP). In Bacteroides thetaiotaomicron (strain ATCC 29148 / DSM 2079 / JCM 5827 / CCUG 10774 / NCTC 10582 / VPI-5482 / E50), this protein is 2-C-methyl-D-erythritol 2,4-cyclodiphosphate synthase.